We begin with the raw amino-acid sequence, 166 residues long: Crossover junction endodeoxyribonuclease RuvC (166 aa).

Active-site residues include aspartate 7, glutamate 67, and aspartate 139. 3 residues coordinate Mg(2+): aspartate 7, glutamate 67, and aspartate 139.

The protein belongs to the RuvC family. In terms of assembly, homodimer which binds Holliday junction (HJ) DNA. The HJ becomes 2-fold symmetrical on binding to RuvC with unstacked arms; it has a different conformation from HJ DNA in complex with RuvA. In the full resolvosome a probable DNA-RuvA(4)-RuvB(12)-RuvC(2) complex forms which resolves the HJ. It depends on Mg(2+) as a cofactor.

The protein resides in the cytoplasm. The enzyme catalyses Endonucleolytic cleavage at a junction such as a reciprocal single-stranded crossover between two homologous DNA duplexes (Holliday junction).. In terms of biological role, the RuvA-RuvB-RuvC complex processes Holliday junction (HJ) DNA during genetic recombination and DNA repair. Endonuclease that resolves HJ intermediates. Cleaves cruciform DNA by making single-stranded nicks across the HJ at symmetrical positions within the homologous arms, yielding a 5'-phosphate and a 3'-hydroxyl group; requires a central core of homology in the junction. The consensus cleavage sequence is 5'-(A/T)TT(C/G)-3'. Cleavage occurs on the 3'-side of the TT dinucleotide at the point of strand exchange. HJ branch migration catalyzed by RuvA-RuvB allows RuvC to scan DNA until it finds its consensus sequence, where it cleaves and resolves the cruciform DNA. In Paramagnetospirillum magneticum (strain ATCC 700264 / AMB-1) (Magnetospirillum magneticum), this protein is Crossover junction endodeoxyribonuclease RuvC.